Here is a 757-residue protein sequence, read N- to C-terminus: Dapper homolog 2 (757 aa).

The inhibition of Nodal signaling stretch occupies residues 1-281 (MWAPSGQGPA…QSPLFALPKE (281 aa)). A coiled-coil region spans residues 55 to 107 (RGQELRLEAALTALREQLSRLRRQDAGLKTHLDQLDQQISELQLDVSRSSCEA). Disordered stretches follow at residues 486–540 (RRRV…CSES), 584–684 (RWQS…EGCF), and 696–728 (AEAG…PPVP). Composition is skewed to basic and acidic residues over residues 505–516 (ERQRVTERDPSR) and 631–644 (ACAR…EHSA). Polar residues predominate over residues 645–656 (DCTSLYHSTIAE). Positions 664 to 673 (SDHTANRFGD) are enriched in basic and acidic residues. The short motif at 754-757 (MTMV) is the PDZ-binding element.

It belongs to the dapper family. As to quaternary structure, can form homodimers and heterodimers with DACT1 or DACT3. Interacts with CSNK1D, PKA catalytic subunit, PKC-type kinase, CSNK2B, DVL1, DVL2, DVL3, VANGL1, VANGL2, TGFBR1, CTNNB1, CTNND2, CTNND1, LEF1, TCF7, TCF7L1 and HDAC1. As to expression, expressed in kidney (inner medullary collecting duct). Expressed in epidermal keratinocytes and hair follicles.

Its function is as follows. Involved in regulation of intracellular signaling pathways during development. Negatively regulates the Nodal signaling pathway, possibly by promoting the lysosomal degradation of Nodal receptors, such as TGFBR1. May be involved in control of the morphogenetic behavior of kidney ureteric bud cells by keeping cells epithelial and restraining their mesenchymal character. May play an inhibitory role in the re-epithelialization of skin wounds by attenuating TGF-beta signaling. In Mus musculus (Mouse), this protein is Dapper homolog 2 (Dact2).